We begin with the raw amino-acid sequence, 277 residues long: MIOREX complex component 2 (277 aa).

It belongs to the NAD(P)-dependent epimerase/dehydratase family. Associates with the mitochondrial ribosome. Component of a multi-subunit COQ enzyme complex.

It is found in the mitochondrion. It functions in the pathway cofactor biosynthesis; ubiquinone biosynthesis. In terms of biological role, component of MIOREX complexes, large expressome-like assemblies of ribosomes with factors involved in all the steps of post-transcriptional gene expression. Component of a multi-subunit COQ enzyme complex required for coenzyme Q biosynthesis. This chain is MIOREX complex component 2, found in Saccharomyces cerevisiae (strain ATCC 204508 / S288c) (Baker's yeast).